A 632-amino-acid chain; its full sequence is tRNA uridine 5-carboxymethylaminomethyl modification enzyme MnmG (632 aa).

Residues 13–18 (GGGHAG), Val-125, and Ser-180 contribute to the FAD site. An NAD(+)-binding site is contributed by 273 to 287 (GPRYCPSIEDKVMRF). Gln-370 is an FAD binding site.

It belongs to the MnmG family. In terms of assembly, homodimer. Heterotetramer of two MnmE and two MnmG subunits. It depends on FAD as a cofactor.

The protein localises to the cytoplasm. NAD-binding protein involved in the addition of a carboxymethylaminomethyl (cmnm) group at the wobble position (U34) of certain tRNAs, forming tRNA-cmnm(5)s(2)U34. The sequence is that of tRNA uridine 5-carboxymethylaminomethyl modification enzyme MnmG from Proteus mirabilis (strain HI4320).